Reading from the N-terminus, the 484-residue chain is Glutamate--tRNA ligase (484 aa).

The 'HIGH' region motif lies at Pro-12 to Thr-22. A 'KMSKS' region motif is present at residues Lys-253–Arg-257. An ATP-binding site is contributed by Lys-256.

It belongs to the class-I aminoacyl-tRNA synthetase family. Glutamate--tRNA ligase type 1 subfamily. As to quaternary structure, monomer.

The protein localises to the cytoplasm. The enzyme catalyses tRNA(Glu) + L-glutamate + ATP = L-glutamyl-tRNA(Glu) + AMP + diphosphate. Catalyzes the attachment of glutamate to tRNA(Glu) in a two-step reaction: glutamate is first activated by ATP to form Glu-AMP and then transferred to the acceptor end of tRNA(Glu). This chain is Glutamate--tRNA ligase, found in Rhizobium etli (strain CIAT 652).